Here is a 354-residue protein sequence, read N- to C-terminus: S-adenosylmethionine:tRNA ribosyltransferase-isomerase (354 aa).

The protein belongs to the QueA family. As to quaternary structure, monomer.

Its subcellular location is the cytoplasm. The enzyme catalyses 7-aminomethyl-7-carbaguanosine(34) in tRNA + S-adenosyl-L-methionine = epoxyqueuosine(34) in tRNA + adenine + L-methionine + 2 H(+). It participates in tRNA modification; tRNA-queuosine biosynthesis. Functionally, transfers and isomerizes the ribose moiety from AdoMet to the 7-aminomethyl group of 7-deazaguanine (preQ1-tRNA) to give epoxyqueuosine (oQ-tRNA). The chain is S-adenosylmethionine:tRNA ribosyltransferase-isomerase from Salmonella paratyphi C (strain RKS4594).